Reading from the N-terminus, the 222-residue chain is 3-dehydroquinate dehydratase (222 aa).

Residues 29 to 31 (ELR) and R55 each bind 3-dehydroquinate. H112 serves as the catalytic Proton donor/acceptor. K139 acts as the Schiff-base intermediate with substrate in catalysis. 3 residues coordinate 3-dehydroquinate: R178, S199, and Q203.

Belongs to the type-I 3-dehydroquinase family. As to quaternary structure, homodimer.

It catalyses the reaction 3-dehydroquinate = 3-dehydroshikimate + H2O. It participates in metabolic intermediate biosynthesis; chorismate biosynthesis; chorismate from D-erythrose 4-phosphate and phosphoenolpyruvate: step 3/7. Its function is as follows. Involved in the third step of the chorismate pathway, which leads to the biosynthesis of aromatic amino acids. Catalyzes the cis-dehydration of 3-dehydroquinate (DHQ) and introduces the first double bond of the aromatic ring to yield 3-dehydroshikimate. The polypeptide is 3-dehydroquinate dehydratase (Dehalococcoides mccartyi (strain ATCC BAA-2100 / JCM 16839 / KCTC 5957 / BAV1)).